Reading from the N-terminus, the 302-residue chain is Nucleotide-binding protein Strop_3101 (302 aa).

ATP is bound at residue 26–33; sequence GVSGGGRS. 77–80 contacts GTP; sequence DVRS.

Belongs to the RapZ-like family.

In terms of biological role, displays ATPase and GTPase activities. The chain is Nucleotide-binding protein Strop_3101 from Salinispora tropica (strain ATCC BAA-916 / DSM 44818 / JCM 13857 / NBRC 105044 / CNB-440).